A 171-amino-acid chain; its full sequence is Small ribosomal subunit protein uS5 (171 aa).

The region spanning 13 to 76 (FLERLVAVNR…DQAKKNLVTI (64 aa)) is the S5 DRBM domain.

It belongs to the universal ribosomal protein uS5 family. As to quaternary structure, part of the 30S ribosomal subunit. Contacts proteins S4 and S8.

Functionally, with S4 and S12 plays an important role in translational accuracy. Located at the back of the 30S subunit body where it stabilizes the conformation of the head with respect to the body. This Dichelobacter nodosus (strain VCS1703A) protein is Small ribosomal subunit protein uS5.